The following is a 1018-amino-acid chain: Fibronectin-binding protein A (1018 aa).

An N-terminal signal peptide occupies residues 1 to 36; the sequence is MKNNLRYGIRKHKLGAASVFLGTMIVVGMGQDKEAA. Residues 7–18 carry the YSIRK-G/S signaling motif motif; the sequence is YGIRKHKLGAAS. The ligand-binding A region stretch occupies residues 37–511; it reads ASEQKTTTVE…SNKANGNGKN (475 aa). Disordered stretches follow at residues 38–61 and 78–195; these read SEQKTTTVEENGNSATDNKTSETQ and ATVT…ETGT. Composition is skewed to polar residues over residues 39–61 and 78–92; these read EQKTTTVEENGNSATDNKTSETQ and ATVTEQPSNATQVTT. The span at 112 to 126 shows a compositional bias: basic and acidic residues; the sequence is TVKEEVVKEEAKPQV. Over residues 129–139 the composition is skewed to polar residues; sequence TTQSQDNSGDQ. The tract at residues 194 to 511 is fibrinogen/elastin/tropoelastin-binding; sequence GTDVTSKVTV…SNKANGNGKN (318 aa). The tract at residues 512-872 is fibronectin-binding; the sequence is GPIIQNNKFE…EGQQTIEEDT (361 aa). The B-1 repeat unit spans residues 545 to 574; sequence EEYDSSTLDIDYHTAIDGGGGYVDGYIETI. Residues 545-604 are 2 X approximate tandem repeats; that stretch reads EEYDSSTLDIDYHTAIDGGGGYVDGYIETIEETDSSAIDIDYHTAVDSEAGHVGGYTESS. A B-2 repeat occupies 575–604; sequence EETDSSAIDIDYHTAVDSEAGHVGGYTESS. 3 disordered regions span residues 595–622, 740–813, and 827–997; these read GHVGGYTESSEESNPIDFEESTHENSKH, LGYE…DIDF, and EIIE…GMLF. Residues 745-782 form a D-1 repeat; sequence GQNSGNQSFEEDTEEDKPKYEQGGNIVDIDFDSVPQIH. A 4 X approximate tandem repeats region spans residues 745–878; the sequence is GQNSGNQSFE…EEDTTPPIVP (134 aa). The stretch at 783–820 is one D-2 repeat; it reads GQNKGNQSFEEDTEKDKPKYEHGGNIIDIDFDSVPHIH. One copy of the D-3 repeat lies at 821–859; that stretch reads GFNKHTEIIEEDTNKDKPSYQFGGHNSVDFEEDTLPKVS. Residues 827 to 838 show a composition bias toward basic and acidic residues; that stretch reads EIIEEDTNKDKP. One copy of the D-4; truncated repeat lies at 860–878; it reads GQNEGQQTIEEDTTPPIVP. The segment covering 875 to 938 has biased composition (pro residues); the sequence is PIVPPTPPTP…PAEPGKPVPP (64 aa). 5 WR repeats span residues 879-892, 893-906, 907-920, 921-934, and 935-948; these read PTPPTPEVPSEPET, PTPPTPEVPAEPGK, and PVPPAKEEPKKPSK. Residues 879–948 are 5 X tandem repeats, Pro-rich (WR); that stretch reads PTPPTPEVPS…AKEEPKKPSK (70 aa). The short motif at 982-986 is the LPXTG sorting signal element; it reads LPETG. Pentaglycyl murein peptidoglycan amidated threonine is present on threonine 985. The propeptide at 986–1018 is removed by sortase; sequence GGEESTNKGMLFGGLFSILGLALLRRNKKNHKA.

Its subcellular location is the secreted. The protein resides in the cell wall. In terms of biological role, promotes bacterial attachment to multiple substrates, such as fibronectin (Fn), fibrinogen (Fg), elastin peptides and tropoelastin. This confers to S.aureus the ability to invade endothelial cells. Promotes adherence to and aggregation of activated platelets. This Staphylococcus aureus (strain USA300) protein is Fibronectin-binding protein A.